The primary structure comprises 341 residues: N-acetyl-gamma-glutamyl-phosphate reductase (341 aa).

Residue Cys-147 is part of the active site.

It belongs to the NAGSA dehydrogenase family. Type 1 subfamily.

The protein resides in the cytoplasm. The enzyme catalyses N-acetyl-L-glutamate 5-semialdehyde + phosphate + NADP(+) = N-acetyl-L-glutamyl 5-phosphate + NADPH + H(+). The protein operates within amino-acid biosynthesis; L-arginine biosynthesis; N(2)-acetyl-L-ornithine from L-glutamate: step 3/4. Functionally, catalyzes the NADPH-dependent reduction of N-acetyl-5-glutamyl phosphate to yield N-acetyl-L-glutamate 5-semialdehyde. The protein is N-acetyl-gamma-glutamyl-phosphate reductase of Dehalococcoides mccartyi (strain ATCC BAA-2266 / KCTC 15142 / 195) (Dehalococcoides ethenogenes (strain 195)).